An 87-amino-acid polypeptide reads, in one-letter code: UPF0250 protein YPK_3025 (87 aa).

It belongs to the UPF0250 family.

In Yersinia pseudotuberculosis serotype O:3 (strain YPIII), this protein is UPF0250 protein YPK_3025.